The following is a 624-amino-acid chain: Ferredoxin-fold anticodon-binding domain-containing protein 1 (624 aa).

One can recognise an FDX-ACB domain in the interval 531 to 624; it reads LYPPCYVHDV…IQQHLYVIPR (94 aa).

In Homo sapiens (Human), this protein is Ferredoxin-fold anticodon-binding domain-containing protein 1 (FDXACB1).